The primary structure comprises 252 residues: tRNA (guanine-N(7)-)-methyltransferase (252 aa).

S-adenosyl-L-methionine-binding residues include Glu-80, Glu-105, Asp-132, and Asp-155. Residue Asp-155 is part of the active site. Substrate contacts are provided by residues Lys-159, Asp-191, and 231–234 (TKFE).

It belongs to the class I-like SAM-binding methyltransferase superfamily. TrmB family.

It catalyses the reaction guanosine(46) in tRNA + S-adenosyl-L-methionine = N(7)-methylguanosine(46) in tRNA + S-adenosyl-L-homocysteine. Its pathway is tRNA modification; N(7)-methylguanine-tRNA biosynthesis. In terms of biological role, catalyzes the formation of N(7)-methylguanine at position 46 (m7G46) in tRNA. This Actinobacillus succinogenes (strain ATCC 55618 / DSM 22257 / CCUG 43843 / 130Z) protein is tRNA (guanine-N(7)-)-methyltransferase.